The following is a 388-amino-acid chain: Chorismate synthase (388 aa).

Positions 39 and 45 each coordinate NADP(+). FMN contacts are provided by residues 132 to 134 (RSS), 251 to 252 (NA), Gly-296, 311 to 315 (KPIPT), and Arg-337.

It belongs to the chorismate synthase family. In terms of assembly, homotetramer. The cofactor is FMNH2.

The enzyme catalyses 5-O-(1-carboxyvinyl)-3-phosphoshikimate = chorismate + phosphate. It functions in the pathway metabolic intermediate biosynthesis; chorismate biosynthesis; chorismate from D-erythrose 4-phosphate and phosphoenolpyruvate: step 7/7. Its function is as follows. Catalyzes the anti-1,4-elimination of the C-3 phosphate and the C-6 proR hydrogen from 5-enolpyruvylshikimate-3-phosphate (EPSP) to yield chorismate, which is the branch point compound that serves as the starting substrate for the three terminal pathways of aromatic amino acid biosynthesis. This reaction introduces a second double bond into the aromatic ring system. The chain is Chorismate synthase from Staphylococcus carnosus (strain TM300).